The primary structure comprises 811 residues: Probable phosphoketolase (811 aa).

This sequence belongs to the XFP family. It depends on thiamine diphosphate as a cofactor.

The protein is Probable phosphoketolase of Methylococcus capsulatus (strain ATCC 33009 / NCIMB 11132 / Bath).